A 1325-amino-acid chain; its full sequence is NHS-like protein 3 (1325 aa).

The stretch at leucine 53 to asparagine 85 forms a coiled coil. Disordered regions lie at residues glutamine 68–serine 92, glutamine 111–serine 131, cysteine 291–cysteine 348, methionine 368–serine 570, glutamine 595–lysine 614, glutamate 829–serine 891, leucine 935–phenylalanine 981, valine 1084–valine 1138, glycine 1243–threonine 1272, and serine 1293–serine 1313. Residues alanine 296–threonine 334 show a composition bias toward low complexity. Residues isoleucine 335–serine 344 are compositionally biased toward polar residues. Positions serine 369 to serine 378 are enriched in low complexity. The span at valine 400–valine 412 shows a compositional bias: polar residues. Over residues leucine 428–aspartate 447 the composition is skewed to basic and acidic residues. The span at proline 450–isoleucine 460 shows a compositional bias: polar residues. Positions lysine 515 to aspartate 524 are enriched in basic and acidic residues. Residues serine 528–threonine 541 show a composition bias toward low complexity. Residues serine 834–isoleucine 850 show a composition bias toward pro residues. 2 stretches are compositionally biased toward polar residues: residues leucine 935–glutamate 948 and glutamine 1088–threonine 1100. The span at lysine 1124 to valine 1138 shows a compositional bias: low complexity. The span at arginine 1302–glutamine 1311 shows a compositional bias: polar residues.

Able to directly activate the TNF-NFkappaB signaling pathway. This chain is NHS-like protein 3 (nhsl3), found in Danio rerio (Zebrafish).